Consider the following 126-residue polypeptide: Probable 4-amino-4-deoxy-L-arabinose-phosphoundecaprenol flippase subunit ArnF (126 aa).

A helical membrane pass occupies residues 1 to 21 (MGFFWALLSVGLVSAAQLLLR). At 22 to 47 (SAMVALPPLTDIVAFLQHLLHFQPGT) the chain is on the periplasmic side. Residues 48–68 (FGLFFGLLGYLLSMVCWYFAL) form a helical membrane-spanning segment. The Cytoplasmic segment spans residues 69–76 (HRLPLSKA). A helical transmembrane segment spans residues 77-97 (YALLSLSYILVWAAAIWLPGW). The Periplasmic portion of the chain corresponds to 98 to 100 (HEP). A helical transmembrane segment spans residues 101–121 (FYWQSLLGVAIIVAGVLTIFW). The Cytoplasmic portion of the chain corresponds to 122–126 (PVKRR).

It belongs to the ArnF family. In terms of assembly, heterodimer of ArnE and ArnF.

Its subcellular location is the cell inner membrane. The protein operates within bacterial outer membrane biogenesis; lipopolysaccharide biosynthesis. Its function is as follows. Translocates 4-amino-4-deoxy-L-arabinose-phosphoundecaprenol (alpha-L-Ara4N-phosphoundecaprenol) from the cytoplasmic to the periplasmic side of the inner membrane. The sequence is that of Probable 4-amino-4-deoxy-L-arabinose-phosphoundecaprenol flippase subunit ArnF from Klebsiella pneumoniae subsp. pneumoniae (strain ATCC 700721 / MGH 78578).